Consider the following 183-residue polypeptide: Adenine phosphoribosyltransferase (183 aa).

The protein belongs to the purine/pyrimidine phosphoribosyltransferase family. Homodimer.

The protein localises to the cytoplasm. The catalysed reaction is AMP + diphosphate = 5-phospho-alpha-D-ribose 1-diphosphate + adenine. It participates in purine metabolism; AMP biosynthesis via salvage pathway; AMP from adenine: step 1/1. Catalyzes a salvage reaction resulting in the formation of AMP, that is energically less costly than de novo synthesis. The polypeptide is Adenine phosphoribosyltransferase (Escherichia coli (strain K12 / MC4100 / BW2952)).